The following is a 108-amino-acid chain: uncharacterized protein (108 aa).

A run of 3 helical transmembrane segments spans residues 24–44, 55–75, and 88–108; these read LWIT…GGLL, AHMA…YLAM, and RFEI…SIGI.

The protein to cation A.eutrophus efflux system protein CzcD.

Its subcellular location is the cell membrane. This is an uncharacterized protein from Geobacillus stearothermophilus (Bacillus stearothermophilus).